The chain runs to 737 residues: Delta and Notch-like epidermal growth factor-related receptor (737 aa).

The signal sequence occupies residues 1 to 25; it reads MPPRRAQAPGAPLLPVLALLPLLLG. Topologically, residues 26-640 are extracellular; the sequence is AGPQSGCLAS…LTNMPRHSLY (615 aa). EGF-like domains follow at residues 44–92 and 94–133; these read APGP…TYCQ and VADPCASNPCHHGNCSSSSSSSSDSYLCICNDGYEGLNCE. The interval 44–133 is interaction with NOTCH1; the sequence is APGPCASQPC…NDGYEGLNCE (90 aa). Cystine bridges form between Cys48-Cys59, Cys53-Cys80, Cys82-Cys91, Cys98-Cys108, Cys103-Cys121, and Cys123-Cys132. N-linked (GlcNAc...) asparagine glycosylation occurs at Asn204. 5 EGF-like domains span residues 309–348, 349–390, 392–428, 430–466, and 468–503; these read PGDSHSNDLECSGKGKCATKPSEATFSCTCQDQYIGTFCE, EFDA…ELCQ, KIDYCVLDPCRNGATCVSSLSGFTCQCLEGYFGSACE, KVDPCMSSPCQNNGTCYVDGVHFTCSCSPGFTGPTCA, and LVDFCALSPCAHGMCRSVGTSYKCLCDPGYHGLYCE. 23 cysteine pairs are disulfide-bonded: Cys319/Cys336, Cys338/Cys347, Cys353/Cys364, Cys358/Cys378, Cys380/Cys389, Cys396/Cys407, Cys401/Cys416, Cys418/Cys427, Cys434/Cys445, Cys439/Cys454, Cys456/Cys465, Cys472/Cys482, Cys477/Cys491, Cys493/Cys502, Cys509/Cys520, Cys514/Cys529, Cys531/Cys540, Cys547/Cys558, Cys552/Cys567, Cys569/Cys578, Cys585/Cys596, Cys590/Cys605, and Cys607/Cys616. Residues 505–541 enclose the EGF-like 8; calcium-binding domain; that stretch reads EYNECLSAPCLNAATCRDLINGYECVCLAEYKGTHCE. In terms of domain architecture, EGF-like 9 spans 543–579; sequence YKDPCANISCLNGGTCDSEGLNGTCICAPGFTGEECD. The N-linked (GlcNAc...) asparagine glycan is linked to Asn564. The 37-residue stretch at 581–617 folds into the EGF-like 10; calcium-binding domain; it reads DINECDSNPCHHAGTCLDQPNGYTCHCPHGWVGANCE. Residues 641–661 traverse the membrane as a helical segment; that stretch reads IIIGALCVAFILMLIILIVGI. Over 662 to 737 the chain is Cytoplasmic; that stretch reads CRISRIEYQG…LVTLIKTKDL (76 aa). Residues 677–680 form an interaction with AP1G1 and somatodendritic targeting region; sequence YEEF. Ser685 is subject to Phosphoserine. Tyr711 is modified (phosphotyrosine). Thr714 bears the Phosphothreonine mark. At Tyr721 the chain carries Phosphotyrosine. Ser722 carries the post-translational modification Phosphoserine.

Interacts with AP1G1. Interacts with NOTCH1. N-glycosylated. Specifically expressed in brain neurons (at protein level).

It localises to the cell membrane. In terms of biological role, mediates neuron-glia interaction during astrocytogenesis. May promote differentiation of Bergmann glia during cerebellar development by activating DELTEX-dependent NOTCH1 signaling. The protein is Delta and Notch-like epidermal growth factor-related receptor (Dner) of Mus musculus (Mouse).